A 224-amino-acid chain; its full sequence is uncharacterized protein (224 aa).

Residue aspartate 52 is part of the active site.

This sequence belongs to the pseudouridine synthase RluA family.

The catalysed reaction is a uridine in RNA = a pseudouridine in RNA. This is an uncharacterized protein from Haemophilus influenzae (strain ATCC 51907 / DSM 11121 / KW20 / Rd).